The following is a 343-amino-acid chain: Phosphate acyltransferase (343 aa).

The protein belongs to the PlsX family. As to quaternary structure, homodimer. Probably interacts with PlsY.

The protein resides in the cytoplasm. It catalyses the reaction a fatty acyl-[ACP] + phosphate = an acyl phosphate + holo-[ACP]. It functions in the pathway lipid metabolism; phospholipid metabolism. Functionally, catalyzes the reversible formation of acyl-phosphate (acyl-PO(4)) from acyl-[acyl-carrier-protein] (acyl-ACP). This enzyme utilizes acyl-ACP as fatty acyl donor, but not acyl-CoA. The chain is Phosphate acyltransferase from Limosilactobacillus reuteri (strain DSM 20016) (Lactobacillus reuteri).